The chain runs to 466 residues: UDP-N-acetylmuramoylalanine--D-glutamate ligase (466 aa).

An ATP-binding site is contributed by 117–123 (GTKGKTT).

The protein belongs to the MurCDEF family.

Its subcellular location is the cytoplasm. It catalyses the reaction UDP-N-acetyl-alpha-D-muramoyl-L-alanine + D-glutamate + ATP = UDP-N-acetyl-alpha-D-muramoyl-L-alanyl-D-glutamate + ADP + phosphate + H(+). The protein operates within cell wall biogenesis; peptidoglycan biosynthesis. Cell wall formation. Catalyzes the addition of glutamate to the nucleotide precursor UDP-N-acetylmuramoyl-L-alanine (UMA). In Roseiflexus sp. (strain RS-1), this protein is UDP-N-acetylmuramoylalanine--D-glutamate ligase.